The primary structure comprises 1423 residues: Protein Shroom2 (1423 aa).

The disordered stretch occupies residues 1 to 101; the sequence is MRPSTVTSRI…PDHTLPKADA (101 aa). Over residues 8–27 the composition is skewed to low complexity; sequence SRIWWSESSSSSSHDLSGSW. Composition is skewed to polar residues over residues 28–69 and 83–93; these read EHTS…NSSI and GSFSTCSSTPD. The residue at position 103 (Ser103) is a Phosphoserine. The tract at residues 116–171 is disordered; the sequence is ASRPGSSRQSQSTGDPQGLQDRPSSFLPRVPGNSSKSPRPEDNIEPKIATSGRSNF. Polar residues predominate over residues 119-130; it reads PGSSRQSQSTGD. Ser185, Ser197, and Ser291 each carry phosphoserine. Disordered stretches follow at residues 300–357, 586–630, 758–855, 872–930, and 1045–1085; these read SYHG…VNQK, TSFQ…SAPR, EILS…SGGQ, PSSS…KLTD, and VETP…KEKT. The ASD1 domain occupies 575-677; that stretch reads LKEAQTRVLK…SEPEKINEVG (103 aa). Residues 761 to 771 show a composition bias toward basic and acidic residues; it reads SEDRKVEKASE. 4 positions are modified to phosphoserine: Ser806, Ser830, Ser831, and Ser833. Phosphothreonine is present on Thr834. Residues 872-885 are compositionally biased toward low complexity; the sequence is PSSSVLSSAQPQDS. Positions 891–923 are enriched in polar residues; sequence DPTSPQPEAQLSSKCQHLQTSTMETSRSPSPQF. Phosphoserine is present on residues Ser918 and Ser920. Residues 1054-1065 are compositionally biased toward pro residues; sequence PEPQPPSTPAPP. A phosphoserine mark is found at Ser1072 and Ser1329. The ASD2 domain occupies 1092–1418; it reads EELAREIVGK…QLKCLFDSLQ (327 aa).

The protein belongs to the shroom family. In terms of assembly, interacts with F-actin.

Its subcellular location is the apical cell membrane. It is found in the cell junction. The protein localises to the tight junction. It localises to the cytoplasm. The protein resides in the cytoskeleton. May be involved in endothelial cell morphology changes during cell spreading. In the retinal pigment epithelium, may regulate the biogenesis of melanosomes and promote their association with the apical cell surface by inducing gamma-tubulin redistribution. The sequence is that of Protein Shroom2 (Shroom2) from Rattus norvegicus (Rat).